The primary structure comprises 222 residues: Apoptosis regulator OPG045 (222 aa).

This sequence belongs to the orthopoxvirus OPG045 family. Homodimer. Interacts with host pro-apoptotic protein BCL2L11 (via BH3 domain). Interacts with host NLRP1. Interacts with host BAK.

Its subcellular location is the host mitochondrion outer membrane. The protein resides in the host cytoplasm. Plays a role in evading host innate immune response by inhibiting host inflammasome activation. Interacts with and inhibits NLR-mediated interleukin-1 beta/IL1B production in infected cells. At the host mitochondria outer membrane, interacts with the BH3 domain of host BAK and prevents BAK from binding active BAX. In turn, host apoptosis is inhibited. The protein is Apoptosis regulator OPG045 (OPG045) of Homo sapiens (Human).